The sequence spans 419 residues: Lipoyl synthase, mitochondrial (419 aa).

The transit peptide at 1 to 26 (MAVCAGRLKCFGNPAVSLRTAASRAY) directs the protein to the mitochondrion. The span at 28–47 (TTTSPDPAIPSSSSASSSSA) shows a compositional bias: low complexity. The tract at residues 28–61 (TTTSPDPAIPSSSSASSSSALPKRPQTSFRDKLN) is disordered. 7 residues coordinate [4Fe-4S] cluster: Cys136, Cys141, Cys147, Cys167, Cys171, Cys174, and Ser382. Positions 150 to 371 (GSSKSAATAT…KDRALEMGFL (222 aa)) constitute a Radical SAM core domain. The tract at residues 399 to 419 (AESTGPESTNVPNVTPDAIVR) is disordered.

It belongs to the radical SAM superfamily. Lipoyl synthase family. It depends on [4Fe-4S] cluster as a cofactor.

Its subcellular location is the mitochondrion. The enzyme catalyses [[Fe-S] cluster scaffold protein carrying a second [4Fe-4S](2+) cluster] + N(6)-octanoyl-L-lysyl-[protein] + 2 oxidized [2Fe-2S]-[ferredoxin] + 2 S-adenosyl-L-methionine + 4 H(+) = [[Fe-S] cluster scaffold protein] + N(6)-[(R)-dihydrolipoyl]-L-lysyl-[protein] + 4 Fe(3+) + 2 hydrogen sulfide + 2 5'-deoxyadenosine + 2 L-methionine + 2 reduced [2Fe-2S]-[ferredoxin]. Its pathway is protein modification; protein lipoylation via endogenous pathway; protein N(6)-(lipoyl)lysine from octanoyl-[acyl-carrier-protein]: step 2/2. Functionally, catalyzes the radical-mediated insertion of two sulfur atoms into the C-6 and C-8 positions of the octanoyl moiety bound to the lipoyl domains of lipoate-dependent enzymes, thereby converting the octanoylated domains into lipoylated derivatives. The protein is Lipoyl synthase, mitochondrial of Coccidioides posadasii (strain C735) (Valley fever fungus).